A 717-amino-acid polypeptide reads, in one-letter code: MAKSPGNSTLEDSLGQYQRSLRERANRSIHQLKCALREVDVTVEEDALDPSTSINVENEDTGVAWHELQHSHAVNQLKALLRQQTNKENETSPPRRRKLSPSRPSECDDGSMPTMHNLVPIINDQSQYIHHLEAEVKFCKDELSGMKNRVQVVVLENERLQQELKSQRPEETLREQTFLDASGNMQNSWIMTREDSRVDEAAKRPFSHGDAETGKTASTGDANKWKLELERLKLTYEAKTDLLESQLMLLRKDLAEYQKTCEDLKERLKHKESLLAASASSRVGGLCLKCAQHEAVLSQTHSNVHIQTIERLTKERDDLMSVLVSVRSSLAEAQKRETSAYEQVKHAVQMTEEANFEKTKALIQCEQLKSELERQTERLEKELASQQEKRAVEKEMIKKEVAREREDAESKMLILSQNIAKLEAQVEKVTREKTAAVSHLEEIQNHVASQEMDVTKVCGEMRFQLNKTKMEKDEVEKEHREYKAKSHKDLEMKVQEIEKLRLELSESEQHVEQEQQKAARARQECLRVTELLGEAERQLHLTRLEKDSIQQSFSNEAKAQALQAQQREQELTQKIQQMETQHDKTESEQYLLLTSQNTFLTKLKEECCLLAKKLEKVSLKSRSQIVRLSQEKRYLCDKLEKLQKRNDELEEQCIQHGRVHETMKERLRQLDKHGQATAQQLVQLLNKQNQLLLERQNLSEEVARLRAQLPSMPQSDC.

Phosphoserine occurs at positions 4 and 28. Residues 84–115 form a disordered region; sequence QTNKENETSPPRRRKLSPSRPSECDDGSMPTM. Coiled coils occupy residues 129–168, 221–278, 352–590, and 622–712; these read IHHL…KSQR, DANK…LAAS, EEAN…SEQY, and RSQI…LPSM. Residues 216 to 717 are sufficient for homodimerization; sequence TASTGDANKW…QLPSMPQSDC (502 aa).

Homodimer. Interacts with OFD1; the interaction is direct. Interacts with FAM161A. Interacts with RABEP2, ERC1 and CEP131. In terms of tissue distribution, expressed in liver, kidney, spleen, brain, heart and muscle. Expressed in photoreceptor cells of the retina.

Its subcellular location is the cytoplasm. It is found in the cytoskeleton. The protein resides in the microtubule organizing center. The protein localises to the centrosome. It localises to the centriole. Its subcellular location is the cilium basal body. It is found in the cell junction. Its function is as follows. Plays a role in the establishment of cell polarity and epithelial lumen formation. Also plays an essential role in ciliogenesis and subsequent Hedgehog signaling pathway that requires the presence of intact primary cilia for pathway activation. Mechanistically, interacts with and mediates RABEP2 centrosomal localization which is critical for ciliogenesis. The chain is Serologically defined colon cancer antigen 8 homolog (Sdccag8) from Mus musculus (Mouse).